The chain runs to 254 residues: D-aminoacyl-tRNA deacylase (254 aa).

Residues K61–E83 form a disordered region. Residues T65–E74 are compositionally biased toward polar residues.

Belongs to the DtdA deacylase family. As to quaternary structure, monomer. Requires Zn(2+) as cofactor.

It catalyses the reaction a D-aminoacyl-tRNA + H2O = a tRNA + a D-alpha-amino acid + H(+). The enzyme catalyses glycyl-tRNA(Ala) + H2O = tRNA(Ala) + glycine + H(+). D-aminoacyl-tRNA deacylase with broad substrate specificity. By recycling D-aminoacyl-tRNA to D-amino acids and free tRNA molecules, this enzyme counteracts the toxicity associated with the formation of D-aminoacyl-tRNA entities in vivo. This is D-aminoacyl-tRNA deacylase from Methanococcus maripaludis (strain C7 / ATCC BAA-1331).